The chain runs to 405 residues: Probable dual-specificity RNA methyltransferase RlmN (405 aa).

A compositionally biased stretch (low complexity) spans 1–15 (MSSTGSSVSTSGLVL). The disordered stretch occupies residues 1 to 34 (MSSTGSSVSTSGLVLPSTPLAEPGKEVPLVVNTP). Glu130 acts as the Proton acceptor in catalysis. Positions 142–386 (SAARATLCLS…VTVRDTRGSE (245 aa)) constitute a Radical SAM core domain. Cysteines 149 and 391 form a disulfide. Residues Cys156, Cys160, and Cys163 each coordinate [4Fe-4S] cluster. S-adenosyl-L-methionine contacts are provided by residues 211–212 (GE), Ser245, 268–270 (SLH), and Asn348. The active-site S-methylcysteine intermediate is the Cys391.

It belongs to the radical SAM superfamily. RlmN family. It depends on [4Fe-4S] cluster as a cofactor.

It localises to the cytoplasm. The enzyme catalyses adenosine(2503) in 23S rRNA + 2 reduced [2Fe-2S]-[ferredoxin] + 2 S-adenosyl-L-methionine = 2-methyladenosine(2503) in 23S rRNA + 5'-deoxyadenosine + L-methionine + 2 oxidized [2Fe-2S]-[ferredoxin] + S-adenosyl-L-homocysteine. It carries out the reaction adenosine(37) in tRNA + 2 reduced [2Fe-2S]-[ferredoxin] + 2 S-adenosyl-L-methionine = 2-methyladenosine(37) in tRNA + 5'-deoxyadenosine + L-methionine + 2 oxidized [2Fe-2S]-[ferredoxin] + S-adenosyl-L-homocysteine. Specifically methylates position 2 of adenine 2503 in 23S rRNA and position 2 of adenine 37 in tRNAs. This Cutibacterium acnes (strain DSM 16379 / KPA171202) (Propionibacterium acnes) protein is Probable dual-specificity RNA methyltransferase RlmN.